A 258-amino-acid chain; its full sequence is UPF0328 protein ECU07_0060 (258 aa).

It belongs to the UPF0328 family.

The chain is UPF0328 protein ECU07_0060 from Encephalitozoon cuniculi (strain GB-M1) (Microsporidian parasite).